Consider the following 430-residue polypeptide: Trigger factor (430 aa).

In terms of domain architecture, PPIase FKBP-type spans 164-249 (DDWAVIDHEG…LKALKTRQLP (86 aa)).

Belongs to the FKBP-type PPIase family. Tig subfamily.

The protein localises to the cytoplasm. The catalysed reaction is [protein]-peptidylproline (omega=180) = [protein]-peptidylproline (omega=0). Functionally, involved in protein export. Acts as a chaperone by maintaining the newly synthesized protein in an open conformation. Functions as a peptidyl-prolyl cis-trans isomerase. This is Trigger factor from Anaeromyxobacter sp. (strain Fw109-5).